We begin with the raw amino-acid sequence, 231 residues long: uncharacterized protein (231 aa).

Transmembrane regions (helical) follow at residues 26–46, 56–76, 84–104, 112–132, 142–162, 163–183, and 206–226; these read TYSWMAAGLALTAGVAYLTAQ, SLRLPLMLAQLALVFVLSMFA, AGALFVGYAALTGLTFSALLF, ITAFAVSAGTFGLMSVAGFVI, FFLFAVLGLVVAMLVNLFVGS, SALSLGISMIGVFLFAGLTAY, and INGALALYLDFINIFLFLLNI.

The protein belongs to the BI1 family.

It is found in the cell membrane. This is an uncharacterized protein from Deinococcus radiodurans (strain ATCC 13939 / DSM 20539 / JCM 16871 / CCUG 27074 / LMG 4051 / NBRC 15346 / NCIMB 9279 / VKM B-1422 / R1).